Here is a 286-residue protein sequence, read N- to C-terminus: Pyridoxine 4-dehydrogenase (286 aa).

Tyr59 (proton donor) is an active-site residue. NADP(+) is bound at residue 210 to 218 (FPLGGFTPL).

It belongs to the aldo/keto reductase family. Aldo/keto reductase 2 subfamily.

It catalyses the reaction pyridoxine + NADP(+) = pyridoxal + NADPH + H(+). It carries out the reaction pyridoxine + NAD(+) = pyridoxal + NADH + H(+). Functionally, catalyzes the NAD(P)H-dependent reduction of pyridoxal to pyridoxine in vitro. Is not able to reduce 4-pyridoxate, and to oxidize pyridoxine or pyridoxamine. Has Kemp eliminase activity towards the non-physiological substrate 5-nitrobenzisoxazole, producing 4-nitro-2-cyanophenol; this activity is not considered to be physiologically relevant. This chain is Pyridoxine 4-dehydrogenase, found in Escherichia coli (strain K12).